The chain runs to 243 residues: MEIMKKQNSQINEINKDEIFVVVPAFNEEKMIGETLKNLKKEGYKNIVVVDDGSMDKTSEIAKKEGVIVCRHILNRGLGGALGTGIKCALLYKPKIIITFDADGQHHPKDVEKVVKPVLFEGYDMAIGSRMMDKNELKNMPLVKRIGNFGLNFITYLMGGYFVTDSQSGLRAFSYEAAKKIIGDLKSDRYEVSSEFIILAKKHGLKLKEVPIKTIYTEYSMSRGTNVITGFKILFKLIMQKIF.

This is an uncharacterized protein from Methanocaldococcus jannaschii (strain ATCC 43067 / DSM 2661 / JAL-1 / JCM 10045 / NBRC 100440) (Methanococcus jannaschii).